Consider the following 727-residue polypeptide: MRPLLLLAPLGWLLLAEAKGDAKPEDNLLVLTVATKETEGFRRFKRSAQFFNYKIQALGLGEDWNVEKGTSAGGGQKVRLLKKALEKHADKEDLVILFTDSYDVLFASGPRELLKKFRQARSQVVFSAEELIYPDRRLETKYPVVSDGKRFLGSGGFIGYAPNLSKLVAEWEGQDSDSDQLFYTRIFLDPEKREQINITLDHRCRIFQNLDGALDEVVLKFEMGHVRARNLAYDTLPVLIHGNGPTKLQLNYLGNYIPRFWTFETGCTVCDEGLRSLKGIGDEALPTVLVGVFIEQPTPFVSLFFQRLLRLHYPQKHMRLFIHNHEQHHKAQVEEFLAEHGSEYQSVKLVGPEVRMANADARNMGADLCRQDRSCTYYFSVDADVALTEPSSLRLLIQQNKNVIAPLMTRHGRLWSNFWGALSADGYYARSEDYVDIVQGRRVGVWNVPYISNIYLIKGSALRGELQSPDLFHHSKLDPDMAFCANVRQQDVFMFLTNRHTLGHLLSLDSYRTTHLHNDLWEVFSNPEDWKEKYIHQNYTKALAGKLVETPCPDVYWFPIFTEVACDELVEEMEHFGQWSLGDNKDNRIQGGYENVPTIDIHMNQIGFEREWHKFLLEYIAPMTEKLYPGYYTRAQFDLAFVVRYKPDEQPSLMPHHDASTFTINIALNRVGVDYEGGGCRFLRYNCSIRAPRKGWTLMHPGRLTHYHEGLPTTRGTRYIAVSFVDP.

The signal sequence occupies residues Met1–Ala18. Asn163, Asn197, and Asn538 each carry an N-linked (GlcNAc...) asparagine glycan. Positions Gln636–Pro727 constitute a Fe2OG dioxygenase domain. Residues His656 and Asp658 each contribute to the Fe cation site. Asn686 carries an N-linked (GlcNAc...) asparagine glycan. His708 contacts Fe cation. The active site involves Arg718.

Homodimer. Identified in a complex with P3H3 and P3H4. Requires Fe(2+) as cofactor. L-ascorbate serves as cofactor.

It localises to the rough endoplasmic reticulum membrane. It catalyses the reaction L-lysyl-[collagen] + 2-oxoglutarate + O2 = (5R)-5-hydroxy-L-lysyl-[collagen] + succinate + CO2. Its function is as follows. Part of a complex composed of PLOD1, P3H3 and P3H4 that catalyzes hydroxylation of lysine residues in collagen alpha chains and is required for normal assembly and cross-linkling of collagen fibrils. Forms hydroxylysine residues in -Xaa-Lys-Gly- sequences in collagens. These hydroxylysines serve as sites of attachment for carbohydrate units and are essential for the stability of the intermolecular collagen cross-links. The chain is Procollagen-lysine,2-oxoglutarate 5-dioxygenase 1 (PLOD1) from Pongo abelii (Sumatran orangutan).